Consider the following 177-residue polypeptide: Large ribosomal subunit protein uL6 (177 aa).

Belongs to the universal ribosomal protein uL6 family. In terms of assembly, part of the 50S ribosomal subunit.

This protein binds to the 23S rRNA, and is important in its secondary structure. It is located near the subunit interface in the base of the L7/L12 stalk, and near the tRNA binding site of the peptidyltransferase center. This chain is Large ribosomal subunit protein uL6, found in Leptothrix cholodnii (strain ATCC 51168 / LMG 8142 / SP-6) (Leptothrix discophora (strain SP-6)).